Here is a 206-residue protein sequence, read N- to C-terminus: MGEVEISARAYGKMCLHASRYPHAAVNGLLLAPATGSGECLCLTDCVPLFHSHLALSVMLEVALNQVDVWGAQAGLVVAGYYHANAVLDDQSPGPLALKIAGRIAEFFPRAVLIMLDNKKLVTRPRVPPVIVLENQGLQWVPKDKNLVMWRDWEESRQMVGALLEGRAHQHLVDFDCHLDDIRQDWTNQRLNTQITQWSGSTDGNA.

Positions 4–139 (VEISARAYGK…VIVLENQGLQ (136 aa)) constitute an MPN domain.

Belongs to the EMC8/EMC9 family. Component of the ER membrane protein complex (EMC). EMC8 and EMC9 are mutually exclusive subunits of the EMC complex.

The protein localises to the endoplasmic reticulum membrane. Functionally, part of the endoplasmic reticulum membrane protein complex (EMC) that enables the energy-independent insertion into endoplasmic reticulum membranes of newly synthesized membrane proteins. Preferentially accommodates proteins with transmembrane domains that are weakly hydrophobic or contain destabilizing features such as charged and aromatic residues. Involved in the cotranslational insertion of multi-pass membrane proteins in which stop-transfer membrane-anchor sequences become ER membrane spanning helices. It is also required for the post-translational insertion of tail-anchored/TA proteins in endoplasmic reticulum membranes. By mediating the proper cotranslational insertion of N-terminal transmembrane domains in an N-exo topology, with translocated N-terminus in the lumen of the ER, controls the topology of multi-pass membrane proteins like the G protein-coupled receptors. By regulating the insertion of various proteins in membranes, it is indirectly involved in many cellular processes. This Mus musculus (Mouse) protein is ER membrane protein complex subunit 9 (Emc9).